Consider the following 128-residue polypeptide: Aspartate 1-decarboxylase (128 aa).

S25 serves as the catalytic Schiff-base intermediate with substrate; via pyruvic acid. S25 carries the pyruvic acid (Ser) modification. T57 contacts substrate. Residue Y58 is the Proton donor of the active site. A substrate-binding site is contributed by 73-75; it reads GAA.

It belongs to the PanD family. In terms of assembly, heterooctamer of four alpha and four beta subunits. Requires pyruvate as cofactor. Post-translationally, is synthesized initially as an inactive proenzyme, which is activated by self-cleavage at a specific serine bond to produce a beta-subunit with a hydroxyl group at its C-terminus and an alpha-subunit with a pyruvoyl group at its N-terminus.

The protein localises to the cytoplasm. The catalysed reaction is L-aspartate + H(+) = beta-alanine + CO2. The protein operates within cofactor biosynthesis; (R)-pantothenate biosynthesis; beta-alanine from L-aspartate: step 1/1. Its function is as follows. Catalyzes the pyruvoyl-dependent decarboxylation of aspartate to produce beta-alanine. This is Aspartate 1-decarboxylase from Moorella thermoacetica (strain ATCC 39073 / JCM 9320).